We begin with the raw amino-acid sequence, 186 residues long: ADP-ribosylation factor-like protein 6 (186 aa).

The N-myristoyl glycine moiety is linked to residue glycine 2. Residues 24 to 31 (GLDNSGKT), threonine 50, 69 to 73 (DMSGQ), glycine 72, 130 to 133 (NKMD), and alanine 164 each bind GTP. Threonine 50 contacts Mg(2+).

This sequence belongs to the small GTPase superfamily. Arf family. In terms of assembly, interacts with SEC61B, ARL6IP1, ARL6IP2, ARL6IP3, ARL6IP4 ARL6IP5 and ARL6IP6. Interacts (GTP-bound form) with the BBSome a complex that contains BBS1, BBS2, BBS4, BBS5, BBS7, BBS8/TTC8, BBS9 and BBIP10. Interacts (GTP-free form) with IFT27.

It is found in the cell projection. The protein resides in the cilium membrane. It localises to the cytoplasm. The protein localises to the cytoskeleton. Its subcellular location is the cilium axoneme. It is found in the cilium basal body. Its function is as follows. Involved in membrane protein trafficking at the base of the ciliary organelle. Mediates recruitment onto plasma membrane of the BBSome complex which would constitute a coat complex required for sorting of specific membrane proteins to the primary cilia. Together with the BBSome complex and LTZL1, controls SMO ciliary trafficking and contributes to the sonic hedgehog (SHH) pathway regulation. May regulate cilia assembly and disassembly and subsequent ciliary signaling events such as the Wnt signaling cascade. Isoform 2 may be required for proper retinal function and organization. The polypeptide is ADP-ribosylation factor-like protein 6 (ARL6) (Pongo abelii (Sumatran orangutan)).